Reading from the N-terminus, the 71-residue chain is MTKYLVEICTFHGPTRQRRWHRVHQGGSRVECQRWVEELVAVFPTEEEARRSFGLTRERARQVYRIRGVRA.

The chain is 8.6 kDa protein from Pseudomonas phage Pf1 (Bacteriophage Pf1).